The chain runs to 448 residues: Probable D-serine dehydratase (448 aa).

An N6-(pyridoxal phosphate)lysine modification is found at Lys-111.

The protein belongs to the serine/threonine dehydratase family. DsdA subfamily. Pyridoxal 5'-phosphate is required as a cofactor.

The catalysed reaction is D-serine = pyruvate + NH4(+). The sequence is that of Probable D-serine dehydratase from Rhizobium etli (strain CIAT 652).